A 319-amino-acid chain; its full sequence is MNGEIRLIPYVTNEQIMDVNELPEGIKVIKAPEMWAKGVKGKNIKVAVLDTGCDTSHPDLKNQIIGGKNFTDDDGGKEDAISDYNGHGTHVAGTIAANDSNGGIAGVAPEASLLIVKVLGGENGSGQYEWIINGINYAVEQKVDIISMSLGGPSDVPELKEAVKNAVKNGVLVVCAAGNEGDGDERTEELSYPAAYNEVIAVGSVSVARELSEFSNANKEIDLVAPGENILSTLPNKKYGKLTGTSMAAPHVSGALALIKSYEEESFQRKLSESEVFAQLIRRTLPLDIAKTLAGNGFLYLTAPDELAEKAEQSHLLTL.

Positions Met-1–Met-17 are excised as a propeptide. Positions Pro-23 to Leu-307 constitute a Peptidase S8 domain. Residues Asp-50, His-87, and Ser-246 each act as charge relay system in the active site.

Belongs to the peptidase S8 family. Homodimer.

The protein localises to the cytoplasm. Functionally, major intracellular protease produced by Bacillus subtilis. This Bacillus subtilis (strain 168) protein is Major intracellular serine protease (isp).